We begin with the raw amino-acid sequence, 542 residues long: Nuclear hormone receptor family member nhr-35 (542 aa).

The segment at residues 74–149 (NSICHICSDV…SGMRDDQVQS (76 aa)) is a DNA-binding region (nuclear receptor). 2 consecutive NR C4-type zinc fingers follow at residues 77–97 (CHIC…CNGC) and 113–137 (CRFE…FMKC). Residues 186–438 (EYDQLLESLL…VLMEELILAE (253 aa)) enclose the NR LBD domain. Residues 445–487 (RQDQTPCSIMNDTPSGSQDMCSPCPEDLLRTSTSSNSPTNSSL) form a disordered region. Positions 448–464 (QTPCSIMNDTPSGSQDM) are enriched in polar residues. Residues 475 to 487 (TSTSSNSPTNSSL) show a composition bias toward low complexity.

This sequence belongs to the nuclear hormone receptor family.

The protein localises to the nucleus. Orphan nuclear receptor. This chain is Nuclear hormone receptor family member nhr-35 (nhr-35), found in Caenorhabditis elegans.